Here is a 435-residue protein sequence, read N- to C-terminus: Antho-RFamide neuropeptides type 1 (435 aa).

Positions 1 to 22 are cleaved as a signal peptide; the sequence is MTTVSYVTILLTVLVQVLTSDA. Positions 23 to 193 are excised as a propeptide; it reads KATNNKRELS…SVPGRYGREL (171 aa). Gln-194 carries the pyrrolidone carboxylic acid modification. Phe-197 is subject to Phenylalanine amide. A propeptide spanning residues 199–201 is cleaved from the precursor; sequence REL. Phenylalanine amide is present on Phe-205. Positions 207 to 209 are excised as a propeptide; sequence REA. A Phenylalanine amide modification is found at Phe-213. Positions 215 to 217 are excised as a propeptide; it reads REL. Phe-221 carries the phenylalanine amide modification. Positions 223–225 are excised as a propeptide; sequence REF. Phenylalanine amide is present on Phe-229. Positions 230-371 are enriched in basic and acidic residues; sequence GREDQGRFGR…EDIAEADQGR (142 aa). 2 disordered regions span residues 230–374 and 386–435; these read GRED…RFGR and AKKR…AKTS. A propeptide spanning residues 231–233 is cleaved from the precursor; the sequence is RED. Phe-237 is subject to Phenylalanine amide. A propeptide spanning residues 239-241 is cleaved from the precursor; it reads RED. At Phe-245 the chain carries Phenylalanine amide. Positions 247 to 249 are excised as a propeptide; it reads RED. Position 253 is a phenylalanine amide (Phe-253). The propeptide occupies 255–257; that stretch reads RED. The residue at position 261 (Phe-261) is a Phenylalanine amide. The propeptide occupies 263–265; sequence RED. Phenylalanine amide is present on Phe-269. Residues 271-273 constitute a propeptide that is removed on maturation; that stretch reads RED. Phe-277 carries the phenylalanine amide modification. The propeptide occupies 279–281; that stretch reads REL. Residue Phe-285 is modified to Phenylalanine amide. The propeptide occupies 287–289; sequence REF. Phe-293 is modified (phenylalanine amide). A propeptide spanning residues 295–297 is cleaved from the precursor; sequence RED. Phe-301 bears the Phenylalanine amide mark. A propeptide spanning residues 303–305 is cleaved from the precursor; it reads RED. Phe-309 carries the phenylalanine amide modification. The propeptide occupies 311 to 313; the sequence is REL. At Phe-317 the chain carries Phenylalanine amide. A propeptide spanning residues 319-321 is cleaved from the precursor; the sequence is RED. Position 325 is a phenylalanine amide (Phe-325). Positions 327-329 are excised as a propeptide; it reads RED. At Phe-333 the chain carries Phenylalanine amide. The propeptide occupies 335–342; the sequence is REDLAKED. Phe-346 is subject to Phenylalanine amide. Positions 348–355 are excised as a propeptide; that stretch reads REDLAKED. A Phenylalanine amide modification is found at Phe-359. Residues 361–368 constitute a propeptide that is removed on maturation; the sequence is REDIAEAD. The residue at position 372 (Phe-372) is a Phenylalanine amide. Residues 374–435 constitute a propeptide that is removed on maturation; the sequence is RNAAAAAAAA…KSDDALAKTS (62 aa). Over residues 398–435 the composition is skewed to basic and acidic residues; the sequence is SDPKPQTRFRDGKDMQEKRKVEKKDKIEKSDDALAKTS.

This sequence belongs to the FARP (FMRFamide related peptide) family.

It is found in the secreted. Functionally, not known but it could act as a transmitter at neuromuscular synapses. This Anthopleura elegantissima (Green aggregating anemone) protein is Antho-RFamide neuropeptides type 1.